A 463-amino-acid polypeptide reads, in one-letter code: Ribulose bisphosphate carboxylase large chain (463 aa).

Lysine 5 is modified (N6,N6,N6-trimethyllysine). Asparagine 114 and threonine 164 together coordinate substrate. The active-site Proton acceptor is the lysine 166. Lysine 168 contributes to the substrate binding site. Mg(2+) contacts are provided by lysine 192, aspartate 194, and glutamate 195. Lysine 192 is modified (N6-carboxylysine). The active-site Proton acceptor is the histidine 285. Residues arginine 286, histidine 318, and serine 370 each contribute to the substrate site.

It belongs to the RuBisCO large chain family. Type I subfamily. Heterohexadecamer of 8 large chains and 8 small chains; disulfide-linked. The disulfide link is formed within the large subunit homodimers. The cofactor is Mg(2+). In terms of processing, the disulfide bond which can form in the large chain dimeric partners within the hexadecamer appears to be associated with oxidative stress and protein turnover.

The protein resides in the plastid. It is found in the chloroplast. The catalysed reaction is 2 (2R)-3-phosphoglycerate + 2 H(+) = D-ribulose 1,5-bisphosphate + CO2 + H2O. The enzyme catalyses D-ribulose 1,5-bisphosphate + O2 = 2-phosphoglycolate + (2R)-3-phosphoglycerate + 2 H(+). Functionally, ruBisCO catalyzes two reactions: the carboxylation of D-ribulose 1,5-bisphosphate, the primary event in carbon dioxide fixation, as well as the oxidative fragmentation of the pentose substrate in the photorespiration process. Both reactions occur simultaneously and in competition at the same active site. The protein is Ribulose bisphosphate carboxylase large chain of Pelargonium grandiflorum (Geranium).